Consider the following 208-residue polypeptide: ATP-dependent Clp protease proteolytic subunit (208 aa).

S107 functions as the Nucleophile in the catalytic mechanism. H132 is a catalytic residue.

The protein belongs to the peptidase S14 family. In terms of assembly, fourteen ClpP subunits assemble into 2 heptameric rings which stack back to back to give a disk-like structure with a central cavity, resembling the structure of eukaryotic proteasomes.

The protein localises to the cytoplasm. It carries out the reaction Hydrolysis of proteins to small peptides in the presence of ATP and magnesium. alpha-casein is the usual test substrate. In the absence of ATP, only oligopeptides shorter than five residues are hydrolyzed (such as succinyl-Leu-Tyr-|-NHMec, and Leu-Tyr-Leu-|-Tyr-Trp, in which cleavage of the -Tyr-|-Leu- and -Tyr-|-Trp bonds also occurs).. Its function is as follows. Cleaves peptides in various proteins in a process that requires ATP hydrolysis. Has a chymotrypsin-like activity. Plays a major role in the degradation of misfolded proteins. This Jannaschia sp. (strain CCS1) protein is ATP-dependent Clp protease proteolytic subunit.